The sequence spans 1183 residues: Spermatogenesis-associated protein 31G1 (1183 aa).

Disordered stretches follow at residues 109–153, 469–555, 661–686, 843–884, 973–1032, and 1048–1087; these read TPIG…FPTF, LMPA…SPWA, TVDD…SSEP, ASQG…VSEV, CLHS…TGLL, and QKRG…PAEA. Residues 124-134 show a composition bias toward basic and acidic residues; that stretch reads CRSEGRPRATE. Residues 135-153 are compositionally biased toward polar residues; the sequence is TQEQVLIQSPSPSRSFPTF. Residues 487–509 show a composition bias toward basic and acidic residues; that stretch reads NPKERLSAPKDVRENLGYREHPH. A compositionally biased stretch (polar residues) spans 671–685; it reads TGKNTDNTKKCSSSE. Pro residues predominate over residues 847 to 858; the sequence is PNPPAVNPPQPT. Positions 975–984 are enriched in polar residues; that stretch reads HSSSQPQAQA. Over residues 993–1002 the composition is skewed to basic residues; it reads QKSKRLKRKA. Residues 1069 to 1079 are compositionally biased toward polar residues; that stretch reads SPTNTRENNPA.

As to expression, expressed in kidney and testis. Expressed at lower levels in stomach, intestine, epididymis and ovary. Expressed at very low levels in heart and spleen.

Its function is as follows. Dispensable for normal development and fertility. The polypeptide is Spermatogenesis-associated protein 31G1 (Spata31g1) (Mus musculus (Mouse)).